A 64-amino-acid chain; its full sequence is Sulfur carrier protein ThiS (64 aa).

Gly64 carries the post-translational modification 1-thioglycine; alternate. Residue Gly64 is modified to Glycyl adenylate; alternate. A Glycyl cysteine thioester (Gly-Cys) (interchain with C-192 in TtuC); alternate cross-link involves residue Gly64.

It belongs to the sulfur carrier protein ThiS family. C-terminal thiocarboxylation occurs in 2 steps, it is first acyl-adenylated (-COAMP) by TtuC, then thiocarboxylated (-COSH) by the cysteine desulfurases IscS or SufS.

It participates in cofactor biosynthesis; thiamine diphosphate biosynthesis. Is the sulfur donor in the synthesis of the thiazole phosphate moiety of thiamine phosphate. The protein is Sulfur carrier protein ThiS of Thermus thermophilus (strain ATCC BAA-163 / DSM 7039 / HB27).